Reading from the N-terminus, the 429-residue chain is Transcriptional adapter 3 (429 aa).

Residues 41 to 70 (IEELDTLQLELETLLSSASRRLRALEEQRQ) adopt a coiled-coil conformation. Disordered stretches follow at residues 86-132 (KLEK…TKVQ), 208-257 (EERR…PFGP), and 274-308 (PMED…HTRS). 2 stretches are compositionally biased toward basic and acidic residues: residues 208 to 221 (EERR…DKKK) and 230 to 249 (LDAK…HEPP). Positions 364–404 (LLKLAREEMRKQELRQRVRVADNEVMEAFRRIMAARQKKRT) form a coiled coil.

It belongs to the NGG1 family.

The protein localises to the nucleus. Functions as a component of the PCAF complex. The PCAF complex is capable of efficiently acetylating histones in a nucleosomal context. The protein is Transcriptional adapter 3 (tada3) of Danio rerio (Zebrafish).